Reading from the N-terminus, the 112-residue chain is Large ribosomal subunit protein bL17 (112 aa).

It belongs to the bacterial ribosomal protein bL17 family. In terms of assembly, part of the 50S ribosomal subunit. Contacts protein L32.

The polypeptide is Large ribosomal subunit protein bL17 (Moorella thermoacetica (strain ATCC 39073 / JCM 9320)).